We begin with the raw amino-acid sequence, 110 residues long: Thiosulfate sulfurtransferase GlpE (110 aa).

Residues 19 to 107 form the Rhodanese domain; sequence EDSLAVLVDI…WRRQALPIIQ (89 aa). Cys-67 serves as the catalytic Cysteine persulfide intermediate.

This sequence belongs to the GlpE family.

It is found in the cytoplasm. It catalyses the reaction thiosulfate + hydrogen cyanide = thiocyanate + sulfite + 2 H(+). The catalysed reaction is thiosulfate + [thioredoxin]-dithiol = [thioredoxin]-disulfide + hydrogen sulfide + sulfite + 2 H(+). Functionally, transferase that catalyzes the transfer of sulfur from thiosulfate to thiophilic acceptors such as cyanide or dithiols. May function in a CysM-independent thiosulfate assimilation pathway by catalyzing the conversion of thiosulfate to sulfite, which can then be used for L-cysteine biosynthesis. The chain is Thiosulfate sulfurtransferase GlpE from Photobacterium profundum (strain SS9).